The chain runs to 1291 residues: Ethylene-insensitive protein 2.2 (1291 aa).

6 consecutive transmembrane segments (helical) span residues A18–W38, F48–Y68, F96–I116, L128–L148, S155–I175, and S195–H215. N-linked (GlcNAc...) asparagine glycosylation is present at N227. 7 consecutive transmembrane segments (helical) span residues G231 to V251, Y253 to F273, V288 to W308, I335 to Q355, L356 to F376, F393 to V413, and V441 to L461. Residues T498–S518 are disordered. N550 carries an N-linked (GlcNAc...) asparagine glycan. Positions A614 to A662 are disordered. A compositionally biased stretch (acidic residues) spans E617–E627. The span at G635–G653 shows a compositional bias: polar residues. S647 and S664 each carry phosphoserine. Disordered stretches follow at residues Q742–R768 and G787–S808. Polar residues predominate over residues N759–R768. T818 is subject to Phosphothreonine. The tract at residues G836–P856 is disordered. N-linked (GlcNAc...) asparagine glycosylation is present at N891. Position 923 is a phosphoserine (S923). The N-linked (GlcNAc...) asparagine glycan is linked to N1027. A disordered region spans residues H1210 to R1229. Positions D1262–K1269 match the Nuclear localization signal motif.

Belongs to the NRAMP (TC 2.A.55) family.

The protein resides in the endoplasmic reticulum membrane. Its subcellular location is the nucleus. It is found in the cytoplasm. Functionally, central factor in signaling pathways regulated by ethylene (ET) and involved in various processes including development, plant defense, senescence, nucleotide sugar flux, and tropisms. In terms of biological role, trafficking signal inducing ethylene response. The nuclear localization is both necessary and sufficient to activate EIN3-mediated transcription and ethylene responses. This Populus trichocarpa (Western balsam poplar) protein is Ethylene-insensitive protein 2.2.